The chain runs to 267 residues: Methylglyoxal reductase DkgB (267 aa).

The active-site Proton donor is the Tyr39. Position 97 (His97) interacts with substrate. Residue 179 to 231 participates in NADP(+) binding; the sequence is MTLAYGKALAEPVIKTIAEQHGATPAQVILSWAMQLGYGVIPSSTKAANLASN.

Belongs to the aldo/keto reductase family. In terms of assembly, monomer.

The protein localises to the cytoplasm. The catalysed reaction is hydroxyacetone + NADP(+) = methylglyoxal + NADPH + H(+). Functionally, aldo-keto reductase that significantly contributes to cellular methylglyoxal detoxification by catalyzing the NADPH-dependent conversion of methylglyoxal to acetol. The polypeptide is Methylglyoxal reductase DkgB (Yersinia pestis).